Consider the following 685-residue polypeptide: Coiled-coil domain-containing protein 8 homolog (685 aa).

The interval 93–127 (VGTYDSSNGSDSELSDFDTSKVKGNRSSSGRTRKV) is disordered. Phosphoserine occurs at positions 142 and 146. Disordered regions lie at residues 207 to 263 (QRVK…GTRR), 281 to 538 (VPPF…KAEA), 558 to 579 (QRAE…TGAT), and 599 to 623 (REEA…KQVK). Positions 219-228 (EVGQTQQAST) are enriched in polar residues. A compositionally biased stretch (basic and acidic residues) spans 246-256 (DSSRNTGDRSD). Low complexity-rich tracts occupy residues 299-329 (AENQ…PRAE), 337-353 (EAVA…PRAE), 361-401 (EAAA…PRAE), and 409-420 (EAAASPIAEAAA). Residues 425-440 (ELVDSPRAETAADPRA) are compositionally biased toward basic and acidic residues. The segment covering 458 to 468 (AAASPIAEAAA) has biased composition (low complexity). Basic and acidic residues predominate over residues 473–488 (ELVDSPRAETAADPRA). Residues 505 to 519 (EVAASPRAEAAASPR) are compositionally biased toward low complexity. A compositionally biased stretch (basic and acidic residues) spans 558-567 (QRAEAIDSQR). Over residues 611–622 (SAGSGSRAQKQV) the composition is skewed to polar residues. Residues 647–653 (PRLPTLP) carry the PxLPxI/L motif; mediates interaction with ANKRA2 motif.

Component of the 3M complex, composed of core components CUL7, CCDC8 and OBSL1. Interacts (via PxLPxI/L motif) with ANKRA2 (via ankyrin repeats); may link the 3M complex to histone deacetylases including HDAC4 and HDAC5.

It localises to the cytoplasm. It is found in the cytoskeleton. Its subcellular location is the microtubule organizing center. The protein localises to the centrosome. Its function is as follows. Core component of the 3M complex, a complex required to regulate microtubule dynamics and genome integrity. It is unclear how the 3M complex regulates microtubules, it could act by controlling the level of a microtubule stabilizer. Required for localization of CUL7 to the centrosome. The protein is Coiled-coil domain-containing protein 8 homolog (Ccdc8) of Mus musculus (Mouse).